Reading from the N-terminus, the 86-residue chain is Colicin-E9 immunity protein (86 aa).

Belongs to the colicins ColE2/ColE8/ColE9 and pyocins S1/S2 family.

In terms of biological role, this protein is able to protect a cell, which harbors the plasmid ColE9 encoding colicin E9, against colicin E9, it binds specifically to the DNase-type colicin and inhibits its bactericidal activity. This is Colicin-E9 immunity protein (imm) from Escherichia coli.